Consider the following 155-residue polypeptide: Ribonuclease H (155 aa).

Positions 1–142 constitute an RNase H type-1 domain; the sequence is MTKQVEIFTD…CDELARAAAM (142 aa). Residues aspartate 10, glutamate 48, aspartate 70, and aspartate 134 each coordinate Mg(2+).

This sequence belongs to the RNase H family. Monomer. It depends on Mg(2+) as a cofactor.

Its subcellular location is the cytoplasm. It carries out the reaction Endonucleolytic cleavage to 5'-phosphomonoester.. Its function is as follows. Endonuclease that specifically degrades the RNA of RNA-DNA hybrids. This is Ribonuclease H from Enterobacter sp. (strain 638).